The following is a 257-amino-acid chain: Uxu operon transcriptional regulator (257 aa).

Residues 8-76 enclose the HTH gntR-type domain; the sequence is QRPYQEVGAM…RGAGIYVLDN (69 aa). The H-T-H motif DNA-binding region spans 36 to 55; the sequence is EREIAEMLDVTRTVVREALI.

In terms of biological role, repressor for the uxuRBA operon. This chain is Uxu operon transcriptional regulator (uxuR), found in Escherichia coli (strain K12).